A 291-amino-acid polypeptide reads, in one-letter code: Undecaprenyl-diphosphatase (291 aa).

8 helical membrane passes run 1 to 21, 48 to 68, 102 to 122, 126 to 146, 162 to 182, 203 to 223, 231 to 251, and 267 to 287; these read MFII…LTEF, SAFT…AWVF, LHVL…DDFI, LFSV…MIIA, ISYF…WPGF, SDFT…LSLL, IADI…GLIA, and FAIY…GFGI.

Belongs to the UppP family.

It is found in the cell membrane. The enzyme catalyses di-trans,octa-cis-undecaprenyl diphosphate + H2O = di-trans,octa-cis-undecaprenyl phosphate + phosphate + H(+). Functionally, catalyzes the dephosphorylation of undecaprenyl diphosphate (UPP). Confers resistance to bacitracin. The protein is Undecaprenyl-diphosphatase of Staphylococcus aureus (strain USA300).